The primary structure comprises 410 residues: Glycylpeptide N-tetradecanoyltransferase (410 aa).

Tetradecanoyl-CoA contacts are provided by F30, W31, F162, L163, C164, V165, S171, R173, L174, and A175.

The protein belongs to the NMT family. In terms of assembly, heterodimer composed of NMT and AK2; AK2 myristoylation stabilizes the complex.

It is found in the cytoplasm. The enzyme catalyses N-terminal glycyl-[protein] + tetradecanoyl-CoA = N-tetradecanoylglycyl-[protein] + CoA + H(+). In terms of biological role, adds a myristoyl group to the N-terminal glycine residue of certain cellular proteins. Myristoylates adenylate kinase AK2. During the asexual blood stage, may myristoylate proteins such as ARO, CDPK1 and GAP45. Probably by mediating protein myristoylation, plays a role in the assembly of the inner membrane complex during the early stages of schizogony and in the formation of rhoptries in the late stages and thus merozoite egress. The protein is Glycylpeptide N-tetradecanoyltransferase of Plasmodium falciparum (isolate 3D7).